The sequence spans 99 residues: Acylphosphatase-2 (99 aa).

N-acetylserine is present on Ser2. The Acylphosphatase-like domain maps to 9-99; that stretch reads SVDYEVFGRV…LEYSSFNIRY (91 aa). Residues Arg24 and Asn42 contribute to the active site. Ser93 is subject to Phosphoserine.

It belongs to the acylphosphatase family.

It catalyses the reaction an acyl phosphate + H2O = a carboxylate + phosphate + H(+). In terms of biological role, its physiological role is not yet clear. The sequence is that of Acylphosphatase-2 (ACYP2) from Bos taurus (Bovine).